The chain runs to 204 residues: Ras-related and estrogen-regulated growth inhibitor-like protein (204 aa).

Positions 1-204 are small GTPase-like; sequence MNDVKLTVLG…NVFGKRRKSV (204 aa). GTP-binding positions include 10–17, 57–63, and 122–125; these read GGEGTGKS, DPCSQPQ, and NKQD.

Belongs to the small GTPase superfamily. Ras family.

The enzyme catalyses GTP + H2O = GDP + phosphate + H(+). Functionally, binds GDP/GTP and may possess intrinsic GTPase activity. The protein is Ras-related and estrogen-regulated growth inhibitor-like protein (RERGL) of Bos taurus (Bovine).